We begin with the raw amino-acid sequence, 441 residues long: DNA-binding protein (441 aa).

The segment covering 1 to 18 (MERTPKRAHGFRSTKPVK) has biased composition (basic residues). Residues 1–85 (MERTPKRAHG…EESPEAPLSD (85 aa)) are disordered. Composition is skewed to acidic residues over residues 24–33 (MMEEEEEEVE) and 67–79 (VDDE…EESP). Residues C191 and H193 each coordinate Zn(2+). Positions 204–236 (VELNPSSEAGKRALAEQNGVIEKNRFGRQVVVL) are flexible loop. C244, C262, C305, C307, C359, and C380 together coordinate Zn(2+). Positions 426–441 (EVLAPVSPIASDDPFA) are C-terminal arm, DBP binding.

The protein belongs to the adenoviridae E2A DNA-binding protein family. In terms of assembly, homomultimerizes on viral ssDNA bound to pTP. Forms a initiation complex with viral polymerase, pTP and hosts NFIA and POU2F1/OCT1. Interacts with host SRCAP.

It localises to the host nucleus. Functionally, plays a role in the elongation phase of viral strand displacement replication by unwinding the template in an ATP-independent fashion, employing its capacity to form multimers. Also enhances the rate of initiation. Released from template upon second strand synthesis. Assembles in complex with viral pTP, viral pol, host NFIA and host POU2F1/OCT1 on viral origin of replication. Covers the whole ssDNA genome during synthesis. The complementary strand synthesis induces its relese from DNA template. May inhibit cellular transcription mediated by the interaction between host SRCAP and CBP. This Fowl adenovirus A serotype 1 (strain CELO / Phelps) (FAdV-1) protein is DNA-binding protein.